A 273-amino-acid polypeptide reads, in one-letter code: Hydroxyethylthiazole kinase 2 (273 aa).

Residue Met45 participates in substrate binding. Positions 120 and 173 each coordinate ATP. Residue Gly200 coordinates substrate.

Belongs to the Thz kinase family. It depends on Mg(2+) as a cofactor.

It carries out the reaction 5-(2-hydroxyethyl)-4-methylthiazole + ATP = 4-methyl-5-(2-phosphooxyethyl)-thiazole + ADP + H(+). Its pathway is cofactor biosynthesis; thiamine diphosphate biosynthesis; 4-methyl-5-(2-phosphoethyl)-thiazole from 5-(2-hydroxyethyl)-4-methylthiazole: step 1/1. Catalyzes the phosphorylation of the hydroxyl group of 4-methyl-5-beta-hydroxyethylthiazole (THZ). This Leuconostoc mesenteroides subsp. mesenteroides (strain ATCC 8293 / DSM 20343 / BCRC 11652 / CCM 1803 / JCM 6124 / NCDO 523 / NBRC 100496 / NCIMB 8023 / NCTC 12954 / NRRL B-1118 / 37Y) protein is Hydroxyethylthiazole kinase 2.